The chain runs to 1434 residues: MDQEVMDFFDFSKELKRVAAAPQGYISSDPRLMATKFKSSEVPNRELIGTDYVSKIVAKEKCLLNGTLLNEQPQGKRIRTLDDLDTDDEGEETEIRRDDEYYKKFRFNLNRDKNLSIYAKREEILAAINAHPVVIIKGETGCGKTTQVPQYILDEAYKSGKYCNIVVTQPRRIAAISIANRVCQEREWQQNTVCSFQVGLHRPNSLEDTRLLYCTTGVLLNNLINNKTLTHYTHIVLDEVHERDQNMDFLLIVVRRLLATNSRHVKIILMSATIDAKELSDYFTTTNSIPPVITTNHRRKHSIEKFYRDQLGSIIWNEEDVGHQQVPEINKHGYRAAVKIIVIIDNMERKAAIQSRQSYDEALRYGAVLIFLPGIYEIDTMAENLTCMLENDPNIKVSIVRCFSLMTPENQRDVFNPPPPGFRKIILTTNIAESSITVPDVSYVIDFCLAKVKVTDTASSFSSLRLTWASKANCRQRAGRVGRLRSGRVYRMVNKHFYQREMPEFGIPEMLRLPLQNSVLKAKVLNMGSPVEILALALSPPNLSDIHNTILLLKEVGALYLTVDGIYDPLDGDLTYWGTIMSRLPLDTRQSRLIILGYIFNMLEEAIIIAAGLSTPGLFAHEGGRSQLGDSFWMHYIFSDGSGSDLVAIWRVYLTYLNIVENGHDQESAIRWAKRFHVSLRSLKEIHLLVQELRVRCTHLGLIPFPVNPNQMMDDREKAIMLKVIIAGAFYPNYFTRSKESCADTDRNIYQTISGHDPCRTVYFTNFKPAYMGELYTRRIKELFQEVRIPPENMDVTFQEGSQKVFVTFKQDDWIEGSSKYVPVSGRVQSEVYKAVMMRQNRVERPIHIMNPSAFMSYVQQRGIGDVIEGRWIPPTKPLNVELLALPSVFDKTISGSITCIVNCGKFFFQPQSFEECIRNMSEIFNAPQQLRNYVTNASAIAKGMMVLAKRDSYFQRATVIRPENQSNRQPMFYVRFIDYGNCTLLPMQLMRLMPRELTEQYGDLPPRVFECRLAMVQPSSVVSGNNRWSTAANDMLKTVAQCGLIDIEVYSLFNNVAAVLIHMRDGIINDKLVELMLCRRSDEDYMSRKDHDFRLRRQESARNLSTAQRQQINEEYLRSCQLPQDHDLPPPPLEKCKTVVMLKGPNSPLECTMRSITRVGLSKRVNIDHLSVNALLLDADPQDHHDHLIVAHEIAESRNGQTLTARGTTLMPNVQGFGALMVMLFSPTMQLKCNKEGTSYVSVLGGLGCDPDTNEPYFAEHDVLINLDVNILEDDVILINQIRYYIDSVFFNFKEENNPAVSVNERVSIYTQLRSLINRLLCKDRRYIERNMSNADFEWETNPELPLPNEPFGKRAIFPMHSLTELQEEDTGRLVQLRENCSMLHKWRNFEGTLPHMTCKLCNQLLESVPQLRLHLLTILHRDREKQIDYCNQ.

The Helicase ATP-binding domain maps to 125–292; that stretch reads LAAINAHPVV…FTTTNSIPPV (168 aa). 138–145 contacts ATP; it reads GETGCGKT. The DEAH box signature appears at 238–241; the sequence is DEVH. The Helicase C-terminal domain occupies 354 to 526; it reads QSRQSYDEAL…NSVLKAKVLN (173 aa). The region spanning 938 to 1001 is the Tudor domain; it reads ASAIAKGMMV…RLMPRELTEQ (64 aa).

Belongs to the DEAD box helicase family. DEAH subfamily.

The protein resides in the cytoplasm. It is found in the perinuclear region. The protein localises to the cytoplasmic ribonucleoprotein granule. It carries out the reaction ATP + H2O = ADP + phosphate + H(+). Its function is as follows. Probable ATP-binding RNA helicase which plays a central role during spermatogenesis and oogenesis by repressing transposable elements and preventing their mobilization, which is essential for the germline integrity. Acts via the piRNA metabolic process, which mediates the repression of transposable elements during meiosis by forming complexes composed of piRNAs and Piwi and govern the methylation and subsequent repression of transposons. Involved in the repression of LTR retrotransposon copia. Also involved in telomere regulation by repressing specialized telomeric retroelements HeT-A, TAHRE, and TART; Drosophila telomeres being maintained by transposition of specialized telomeric retroelements. Involved in telomeric trans-silencing, a repression mechanism by which a transposon or a transgene inserted in subtelomeric heterochromatin has the capacity to repress in trans in the female germline, a homologous transposon, or transgene located in euchromatin. Involved in the repression of testis-expressed Stellate genes by the homologous Su(Ste) repeats. Required for anteroposterior and dorsoventral axis formation during oogenesis. Key component of the perinuclear meiotic nuage, an electron dense structure involved in the post-transcriptional regulation of transposons and mRNAs; required for recruitment of other nuage comonents including vas, krimp, aub and mael. May have a role in production of piwi-interacting RNA (piRNA). The chain is Probable ATP-dependent RNA helicase spindle-E from Drosophila melanogaster (Fruit fly).